A 161-amino-acid chain; its full sequence is Large ribosomal subunit protein uL11 (161 aa).

The protein belongs to the universal ribosomal protein uL11 family. Part of the ribosomal stalk of the 50S ribosomal subunit. Interacts with L10 and the large rRNA to form the base of the stalk. L10 forms an elongated spine to which L12 dimers bind in a sequential fashion forming a multimeric L10(L12)X complex.

In terms of biological role, forms part of the ribosomal stalk which helps the ribosome interact with GTP-bound translation factors. The protein is Large ribosomal subunit protein uL11 of Methanosarcina barkeri (strain Fusaro / DSM 804).